We begin with the raw amino-acid sequence, 179 residues long: Large ribosomal subunit protein uL6 (179 aa).

Belongs to the universal ribosomal protein uL6 family. In terms of assembly, part of the 50S ribosomal subunit.

This protein binds to the 23S rRNA, and is important in its secondary structure. It is located near the subunit interface in the base of the L7/L12 stalk, and near the tRNA binding site of the peptidyltransferase center. The polypeptide is Large ribosomal subunit protein uL6 (Spiroplasma citri).